The sequence spans 272 residues: TLC domain-containing protein 4 C (272 aa).

Helical transmembrane passes span 16-36 (FSNS…FIIY), 71-91 (VSMI…VESF), 103-123 (SLLM…IICY), 128-148 (LVGT…IYVA), 155-175 (CFVP…PLNM), 196-216 (FVIT…IYLV), and 233-253 (VFIT…FLLI). One can recognise a TLC domain in the interval 61 to 261 (KKKLEWDQRV…LIKKLYQTYL (201 aa)).

It belongs to the TLCD4 family.

It localises to the membrane. This is TLC domain-containing protein 4 C (tlcd4c) from Dictyostelium discoideum (Social amoeba).